The following is a 216-amino-acid chain: 3-isopropylmalate dehydratase small subunit (216 aa).

This sequence belongs to the LeuD family. LeuD type 1 subfamily. Heterodimer of LeuC and LeuD.

It catalyses the reaction (2R,3S)-3-isopropylmalate = (2S)-2-isopropylmalate. Its pathway is amino-acid biosynthesis; L-leucine biosynthesis; L-leucine from 3-methyl-2-oxobutanoate: step 2/4. Its function is as follows. Catalyzes the isomerization between 2-isopropylmalate and 3-isopropylmalate, via the formation of 2-isopropylmaleate. This Ralstonia nicotianae (strain ATCC BAA-1114 / GMI1000) (Ralstonia solanacearum) protein is 3-isopropylmalate dehydratase small subunit.